The chain runs to 234 residues: Ribonuclease 3 (234 aa).

The RNase III domain occupies 13-136 (YITLEKALGY…LMAGVYLEAG (124 aa)). E49 provides a ligand contact to Mg(2+). The active site involves D53. Mg(2+) contacts are provided by S122 and E125. E125 is a catalytic residue. A DRBM domain is found at 163-232 (DYKTALQELT…AYQALQKLKG (70 aa)).

This sequence belongs to the ribonuclease III family. Homodimer. It depends on Mg(2+) as a cofactor.

Its subcellular location is the cytoplasm. The enzyme catalyses Endonucleolytic cleavage to 5'-phosphomonoester.. In terms of biological role, digests double-stranded RNA. Involved in the processing of primary rRNA transcript to yield the immediate precursors to the large and small rRNAs (23S and 16S). Processes some mRNAs, and tRNAs when they are encoded in the rRNA operon. Processes pre-crRNA and tracrRNA of type II CRISPR loci if present in the organism. In Helicobacter acinonychis (strain Sheeba), this protein is Ribonuclease 3.